The chain runs to 706 residues: MTALWLIVLCGVLSVVYAIWATSSVLSADAGSPRMQEIAAAVREGAQAYLRRQYTTIGIVGIVIFVLLVYFLGFYVAIGFAIGAILSGAAGFIGMNVSVRANVRTAQAATTSLAGGLELAFKAGAITGMLVAGLALLGVTLYFGFLVYSLKLAPDSRVVVDAMVALGFGASLISIFARLGGGIFTKGADVGGDLVGKVEAGIPEDDPRNPATIADNVGDNVGDCAGMAADLFETYAVTAVATMVLAAIFFAKTPILMSMMTLPLAIGGICIITSIIGTFFVKLGPSQSIMGALYKGLIATGVLSLIGIAVVIYTLIGFGKLDGVDYTGMSLFECGVVGLIVTALIIWITEYYTGTDYRPVKSIAAASVTGHGTNVIQGLAISMEATALPAIVIIAGILVTYSLAGLFGIAIATATMLALAGMIVALDAFGPVTDNAGGIAEMAGLPKEVRKSTDALDAVGNTTKAVTKGYAIGSAGLGALVLFAAYNQDLKFFVADSAHHTYFAGVNPDFSLNNPYVVVGLLFGGLLPYLFGAMGMTAVGRAASAIVEEVRRQFREKPGIMQGTDKPDYGKAVDLLTKAAIKEMIIPSLLPVLSPIVVYFLIYAIAGGGATGKSAAFSAVGAMLLGVIVTGLFVAISMTSGGGAWDNAKKYIEDGHYGGKGSDAHKSAVTGDTVGDPYKDTAGPAVNPMIKITNIVALLLLAILAH.

The next 5 helical transmembrane spans lie at 1 to 21 (MTALWLIVLCGVLSVVYAIWA), 62 to 82 (IVIFVLLVYFLGFYVAIGFAI), 83 to 103 (GAILSGAAGFIGMNVSVRANV), 128 to 148 (GMLVAGLALLGVTLYFGFLVY), and 164 to 184 (VALGFGASLISIFARLGGGIF). Lys186 contacts substrate. Residues Asp189, Asp193, Asn216, and Asp219 each contribute to the Mg(2+) site. Transmembrane regions (helical) follow at residues 231–251 (LFETYAVTAVATMVLAAIFFA), 261–281 (TLPLAIGGICIITSIIGTFFV), 298–318 (IATGVLSLIGIAVVIYTLIGF), 328–348 (GMSLFECGVVGLIVTALIIWI), 376–398 (IQGLAISMEATALPAIVIIAGIL), and 412–432 (ATATMLALAGMIVALDAFGPV). Asp434 is a binding site for Mg(2+). 4 helical membrane passes run 465–485 (AVTKGYAIGSAGLGALVLFAA), 516–536 (YVVVGLLFGGLLPYLFGAMGM), 585–605 (IIPSLLPVLSPIVVYFLIYAI), and 616–636 (AFSAVGAMLLGVIVTGLFVAI). 3 residues coordinate Ca(2+): Asp646, Asp672, and Asp676. Lys679 serves as a coordination point for substrate. Residues 685 to 705 (AVNPMIKITNIVALLLLAILA) form a helical membrane-spanning segment.

Belongs to the H(+)-translocating pyrophosphatase (TC 3.A.10) family. K(+)-insensitive subfamily. In terms of assembly, homodimer. The cofactor is Mg(2+).

Its subcellular location is the cell inner membrane. The catalysed reaction is diphosphate + H2O + H(+)(in) = 2 phosphate + 2 H(+)(out). Functionally, proton pump that utilizes the energy of pyrophosphate hydrolysis as the driving force for proton movement across the membrane. Generates a proton motive force. This Bradyrhizobium diazoefficiens (strain JCM 10833 / BCRC 13528 / IAM 13628 / NBRC 14792 / USDA 110) protein is K(+)-insensitive pyrophosphate-energized proton pump.